The sequence spans 133 residues: U-scoloptoxin(05)-Sa1a (133 aa).

The N-terminal stretch at M1 to T24 is a signal peptide.

It belongs to the scoloptoxin-05 family. Post-translationally, contains 5 disulfide bonds. Expressed by the venom gland.

Its subcellular location is the secreted. This Scolopendra alternans (Florida Keys giant centipede) protein is U-scoloptoxin(05)-Sa1a.